The sequence spans 607 residues: Guanine nucleotide-binding protein-like 1 (607 aa).

Positions 1-14 (MPRKKPFSVKQKKK) are enriched in basic residues. The tract at residues 1 to 81 (MPRKKPFSVK…GPRGYDPNRY (81 aa)) is disordered. Positions 15 to 26 (QLQDKRERKRGL) are enriched in basic and acidic residues. Residues serine 32, serine 33, and serine 34 each carry the phosphoserine modification. A phosphothreonine mark is found at threonine 48 and threonine 50. Phosphoserine is present on residues serine 51 and serine 68. A CP-type G domain is found at 178 to 418 (WRQLWRVLEM…LCDCPGLIFP (241 aa)). A GTP-binding site is contributed by 225 to 228 (NKVD). Position 324 is a phosphoserine (serine 324). GTP-binding positions include 367-374 (GFPNVGKS) and 411-415 (DCPGL). The disordered stretch occupies residues 544 to 607 (GRVGPAGDEE…PYALLGEDEC (64 aa)). Residues 550–585 (GDEEEEEEEELSSSCEEEGEEDRDADEEGEGDEDTP) are compositionally biased toward acidic residues. Serine 561, serine 562, and serine 563 each carry phosphoserine.

Belongs to the TRAFAC class YlqF/YawG GTPase family.

Functionally, possible regulatory or functional link with the histocompatibility cluster. This chain is Guanine nucleotide-binding protein-like 1 (Gnl1), found in Mus musculus (Mouse).